The sequence spans 217 residues: ATP-dependent Clp protease proteolytic subunit 2 (217 aa).

Ser-113 (nucleophile) is an active-site residue. Residue His-138 is part of the active site.

Belongs to the peptidase S14 family. As to quaternary structure, fourteen ClpP subunits assemble into 2 heptameric rings which stack back to back to give a disk-like structure with a central cavity, resembling the structure of eukaryotic proteasomes.

The protein localises to the cytoplasm. The catalysed reaction is Hydrolysis of proteins to small peptides in the presence of ATP and magnesium. alpha-casein is the usual test substrate. In the absence of ATP, only oligopeptides shorter than five residues are hydrolyzed (such as succinyl-Leu-Tyr-|-NHMec, and Leu-Tyr-Leu-|-Tyr-Trp, in which cleavage of the -Tyr-|-Leu- and -Tyr-|-Trp bonds also occurs).. In terms of biological role, cleaves peptides in various proteins in a process that requires ATP hydrolysis. Has a chymotrypsin-like activity. Plays a major role in the degradation of misfolded proteins. This Frankia casuarinae (strain DSM 45818 / CECT 9043 / HFP020203 / CcI3) protein is ATP-dependent Clp protease proteolytic subunit 2.